A 967-amino-acid chain; its full sequence is Serine/threonine-protein kinase/endoribonuclease ire-1 (967 aa).

The N-terminal stretch at 1–21 (MRATFHLFTFIFLLLFSSVIC) is a signal peptide. Over 22-438 (ISTPGFRNDH…LLLLNNHPIP (417 aa)) the chain is Lumenal. N-linked (GlcNAc...) asparagine glycans are attached at residues Asn100 and Asn188. The chain crosses the membrane as a helical span at residues 439–455 (FYATLVTMFALLLTVIW). Residues 456 to 967 (QCGRQWDQQK…IKKKSNPNTD (512 aa)) are Cytoplasmic-facing. The tract at residues 474-494 (EIVNNPGESRSAQTSKQSNRG) is disordered. The segment covering 479 to 494 (PGESRSAQTSKQSNRG) has biased composition (polar residues). Residues 518–778 (YSPSDILGTG…ADAVLNHPFF (261 aa)) form the Protein kinase domain. Residues 524–532 (LGTGCEGTV) and Lys546 each bind ATP. The Proton acceptor role is filled by Asp636. Position 672 is a phosphoserine; by autocatalysis (Ser672). The 129-residue stretch at 781 to 909 (SEKRLAYFSD…EAVFKRYYSD (129 aa)) folds into the KEN domain. Residues 948–967 (RTPLKLDKRNIKKKSNPNTD) form a disordered region. Over residues 957–967 (NIKKKSNPNTD) the composition is skewed to basic residues.

The protein belongs to the protein kinase superfamily. Ser/Thr protein kinase family. Mg(2+) serves as cofactor. In terms of processing, autophosphorylated mainly on serine residues.

It localises to the endoplasmic reticulum membrane. It carries out the reaction L-seryl-[protein] + ATP = O-phospho-L-seryl-[protein] + ADP + H(+). The catalysed reaction is L-threonyl-[protein] + ATP = O-phospho-L-threonyl-[protein] + ADP + H(+). The kinase domain is activated by trans-autophosphorylation. Kinase activity is required for activation of the endoribonuclease domain. In terms of biological role, senses unfolded proteins in the lumen of the endoplasmic reticulum via its N-terminal domain which leads to enzyme auto-activation. The active endoribonuclease domain splices xbp-1 precursor mRNA to produce the mature form which then induces transcription of UPR target genes. Unfolded protein response (UPR) transcriptional activation by ire-1, as well as translational attenuation by pek-1 in a complementary pathway, maintains ER homeostasis. Regulates the transcriptional up-regulation of nucleoside-diphosphatase apy-1 and many other genes, upon ER stress. By activating the UPR pathway during non-lethal hypoxia pre-conditioning, confers adaptive protection to subsequent exposure to hypoxia. ire-1 and pek-1 are redundant genes that control a pathway essential for larval development and survival. Plays a role in the nuclear retention of unspliced mRNAs. The sequence is that of Serine/threonine-protein kinase/endoribonuclease ire-1 from Caenorhabditis elegans.